The following is a 685-amino-acid chain: Nucleolar protein 4 (685 aa).

A disordered region spans residues Met-1–Asp-21. The 78-residue stretch at Lys-26–Arg-103 folds into the RRM 1 domain. The segment covering Arg-106–Glu-123 has biased composition (basic and acidic residues). Residues Arg-106–Met-142 are disordered. Acidic residues predominate over residues Asn-130–Asp-140. The RRM 2 domain maps to Pro-147 to Gln-225. Residues Asp-231 to Lys-242 are compositionally biased toward basic and acidic residues. The segment at Asp-231–Asn-285 is disordered. Over residues Asp-243 to Arg-268 the composition is skewed to acidic residues. Position 247 is a phosphoserine (Ser-247). 2 RRM domains span residues Phe-290–Val-383 and Thr-462–Glu-612. Residue Thr-379 is modified to Phosphothreonine. Positions Glu-622–Arg-631 are enriched in basic residues. Residues Glu-622–Lys-685 are disordered. Basic and acidic residues predominate over residues Ser-645–Arg-672. Over residues Ile-674 to Lys-685 the composition is skewed to basic residues.

As to quaternary structure, interacts with NOP1.

The protein localises to the nucleus. The protein resides in the nucleolus. Required for 60S ribosomal subunit synthesis. Probably involved in the processing of 27S rRNA to produce mature 25S rRNA. In Saccharomyces cerevisiae (strain ATCC 204508 / S288c) (Baker's yeast), this protein is Nucleolar protein 4 (NOP4).